Consider the following 664-residue polypeptide: DNA ligase (664 aa).

Residues 30 to 34 (DFEFD), 79 to 80 (SL), and E109 each bind NAD(+). The N6-AMP-lysine intermediate role is filled by K111. Residues R132, E169, K284, and K308 each contribute to the NAD(+) site. Residues C403, C406, C421, and C427 each coordinate Zn(2+). The BRCT domain maps to 586–664 (NRSEKLKGLT…NEDAFLNMLE (79 aa)).

The protein belongs to the NAD-dependent DNA ligase family. LigA subfamily. It depends on Mg(2+) as a cofactor. The cofactor is Mn(2+).

It catalyses the reaction NAD(+) + (deoxyribonucleotide)n-3'-hydroxyl + 5'-phospho-(deoxyribonucleotide)m = (deoxyribonucleotide)n+m + AMP + beta-nicotinamide D-nucleotide.. DNA ligase that catalyzes the formation of phosphodiester linkages between 5'-phosphoryl and 3'-hydroxyl groups in double-stranded DNA using NAD as a coenzyme and as the energy source for the reaction. It is essential for DNA replication and repair of damaged DNA. The polypeptide is DNA ligase (Parabacteroides distasonis (strain ATCC 8503 / DSM 20701 / CIP 104284 / JCM 5825 / NCTC 11152)).